The primary structure comprises 127 residues: Protein ApaG (127 aa).

Residues 3–127 form the ApaG domain; that stretch reads KDKRYAFSVK…FQLNMPRVLH (125 aa).

The chain is Protein ApaG from Methylobacillus flagellatus (strain ATCC 51484 / DSM 6875 / VKM B-1610 / KT).